A 507-amino-acid chain; its full sequence is ATP synthase subunit alpha, chloroplastic (507 aa).

170–177 (GDRQTGKT) contacts ATP.

The protein belongs to the ATPase alpha/beta chains family. As to quaternary structure, F-type ATPases have 2 components, CF(1) - the catalytic core - and CF(0) - the membrane proton channel. CF(1) has five subunits: alpha(3), beta(3), gamma(1), delta(1), epsilon(1). CF(0) has four main subunits: a, b, b' and c.

The protein resides in the plastid. It is found in the chloroplast thylakoid membrane. It catalyses the reaction ATP + H2O + 4 H(+)(in) = ADP + phosphate + 5 H(+)(out). Produces ATP from ADP in the presence of a proton gradient across the membrane. The alpha chain is a regulatory subunit. The sequence is that of ATP synthase subunit alpha, chloroplastic from Liriodendron tulipifera (Tuliptree).